The chain runs to 30 residues: Photosystem I reaction center subunit XII (30 aa).

A helical transmembrane segment spans residues 7-29; it reads VYIALMAALLASVLAIRLGATLY.

This sequence belongs to the PsaM family.

It localises to the plastid. The protein localises to the chloroplast thylakoid membrane. This Thalassiosira pseudonana (Marine diatom) protein is Photosystem I reaction center subunit XII.